The following is a 371-amino-acid chain: MSAVEKLPEDFCANPDVAWTFPKVFYTSSQVFEHEKEAIFAKSWICVAHGSELAQPNDYITRKVIGENIVIIRGKDSVLRAFYNVCPHRGHELLSGSGKAKNVITCPYHAWTFKLDGSLALARNCDHVESFDKENSSMVPLKVEEYAGFVFINMDENATCVEDQLPEFAERLNQACSVIKDLKLAARFVTETPANWKVIVDNYLECYHCGPAHPGFADSVQVDKYWHTTHQNWTLQYGFARSSEKSFKLDPSVTDPEFHGFWTWPCTMFNVPPGSNFMTVIYEFPVDAETTLQHYDIYFTNEELTQDQKDLIEWYRNVFRPEDLNLVESVQRGLKSRGYRGQGRIMTDKQRSGISEHGIAYFQHLVAQHHK.

One can recognise a Rieske domain in the interval 44-152; the sequence is WICVAHGSEL…VEEYAGFVFI (109 aa). Residues C86, H88, C106, and H109 each coordinate [2Fe-2S] cluster. Residues H208, H213, and D323 each contribute to the Fe cation site.

It belongs to the bacterial ring-hydroxylating dioxygenase alpha subunit family. CntA subfamily. Composed of an oxygenase subunit and a reductase subunit. Requires [2Fe-2S] cluster as cofactor. Fe cation serves as cofactor.

The catalysed reaction is (R)-carnitine + NADH + O2 + H(+) = (3R)-3-hydroxy-4-oxobutanoate + trimethylamine + NAD(+) + H2O. It carries out the reaction (R)-carnitine + NADPH + O2 + H(+) = (3R)-3-hydroxy-4-oxobutanoate + trimethylamine + NADP(+) + H2O. It functions in the pathway amine and polyamine metabolism; carnitine metabolism. Inhibited by EDTA. Functionally, converts carnitine to trimethylamine and malic semialdehyde. Acts on both enantiomers. This Acinetobacter pittii (strain PHEA-2) protein is Carnitine monooxygenase oxygenase subunit.